Reading from the N-terminus, the 135-residue chain is Large ribosomal subunit protein mL41A (135 aa).

A mitochondrion-targeting transit peptide spans 1 to 13; sequence MGLISKIARGLVR.

It belongs to the mitochondrion-specific ribosomal protein mL41 family. Component of the mitochondrial ribosome large subunit (39S) which comprises a 16S rRNA and about 50 distinct proteins.

Its subcellular location is the mitochondrion. Its function is as follows. Component of the mitochondrial ribosome large subunit. Also involved in apoptosis and cell cycle. This Xenopus laevis (African clawed frog) protein is Large ribosomal subunit protein mL41A (mrpl41-a).